A 360-amino-acid chain; its full sequence is Phospho-N-acetylmuramoyl-pentapeptide-transferase (360 aa).

10 consecutive transmembrane segments (helical) span residues 27–47, 70–90, 98–118, 134–154, 168–188, 199–219, 239–259, 263–283, 288–308, and 337–357; these read GALF…ISLL, GTPT…ILLW, VWVT…DDYL, LLLE…YSPA, TLLN…VGAG, GLAI…AYLV, LAVV…FNAP, IFMG…IAVA, IVLA…IIQV, and QVVI…LATL.

The protein belongs to the glycosyltransferase 4 family. MraY subfamily. Mg(2+) serves as cofactor.

It localises to the cell inner membrane. The catalysed reaction is UDP-N-acetyl-alpha-D-muramoyl-L-alanyl-gamma-D-glutamyl-meso-2,6-diaminopimeloyl-D-alanyl-D-alanine + di-trans,octa-cis-undecaprenyl phosphate = di-trans,octa-cis-undecaprenyl diphospho-N-acetyl-alpha-D-muramoyl-L-alanyl-D-glutamyl-meso-2,6-diaminopimeloyl-D-alanyl-D-alanine + UMP. It participates in cell wall biogenesis; peptidoglycan biosynthesis. Functionally, catalyzes the initial step of the lipid cycle reactions in the biosynthesis of the cell wall peptidoglycan: transfers peptidoglycan precursor phospho-MurNAc-pentapeptide from UDP-MurNAc-pentapeptide onto the lipid carrier undecaprenyl phosphate, yielding undecaprenyl-pyrophosphoryl-MurNAc-pentapeptide, known as lipid I. This Methylorubrum extorquens (strain CM4 / NCIMB 13688) (Methylobacterium extorquens) protein is Phospho-N-acetylmuramoyl-pentapeptide-transferase.